A 266-amino-acid chain; its full sequence is Beta-lactamase OXA-20 (266 aa).

The signal sequence occupies residues 1-21; the sequence is MIIRFLALLFSAVVLVSLGHA. Catalysis depends on Ser72, which acts as the Acyl-ester intermediate. Lys75 carries the N6-carboxylysine modification. 210–212 contacts substrate; the sequence is KTG.

Belongs to the class-D beta-lactamase family.

The enzyme catalyses a beta-lactam + H2O = a substituted beta-amino acid. Its activity is regulated as follows. Inhibited by clavulanic acid. Functionally, this is an oxacillin-hydrolyzing beta-lactamase. The sequence is that of Beta-lactamase OXA-20 (bla) from Pseudomonas aeruginosa.